The following is a 505-amino-acid chain: Cytochrome P450 52C1 (505 aa).

A helical transmembrane segment spans residues 4–21 (LFCFLAGIIVVYKAAQYY). Position 453 (Cys453) interacts with heme.

Belongs to the cytochrome P450 family. Requires heme as cofactor.

Its subcellular location is the membrane. In terms of biological role, together with an NADPH cytochrome P450 the enzyme system catalyzes the terminal hydroxylation as the first step in the assimilation of alkanes and fatty acids. The polypeptide is Cytochrome P450 52C1 (CYP52C1) (Candida tropicalis (Yeast)).